Reading from the N-terminus, the 314-residue chain is 4-diphosphocytidyl-2-C-methyl-D-erythritol kinase (314 aa).

Residue K11 is part of the active site. 99–109 (PMAAGLAGGST) provides a ligand contact to ATP. D141 is an active-site residue.

This sequence belongs to the GHMP kinase family. IspE subfamily.

It catalyses the reaction 4-CDP-2-C-methyl-D-erythritol + ATP = 4-CDP-2-C-methyl-D-erythritol 2-phosphate + ADP + H(+). The protein operates within isoprenoid biosynthesis; isopentenyl diphosphate biosynthesis via DXP pathway; isopentenyl diphosphate from 1-deoxy-D-xylulose 5-phosphate: step 3/6. Catalyzes the phosphorylation of the position 2 hydroxy group of 4-diphosphocytidyl-2C-methyl-D-erythritol. This chain is 4-diphosphocytidyl-2-C-methyl-D-erythritol kinase, found in Trichodesmium erythraeum (strain IMS101).